Reading from the N-terminus, the 802-residue chain is Leucine--tRNA ligase (802 aa).

The short motif at 40–51 (PYPSGAGLHVGH) is the 'HIGH' region element. A 'KMSKS' region motif is present at residues 576-580 (KMSKS). ATP is bound at residue Lys579.

Belongs to the class-I aminoacyl-tRNA synthetase family.

It localises to the cytoplasm. The catalysed reaction is tRNA(Leu) + L-leucine + ATP = L-leucyl-tRNA(Leu) + AMP + diphosphate. The polypeptide is Leucine--tRNA ligase (Bacillus mycoides (strain KBAB4) (Bacillus weihenstephanensis)).